The sequence spans 232 residues: MGKSQYVTGIKKMPINERPREKLLNYGPESLSNPELLAIILSTGTKEMSAIDLATHVLSYSEEGLRHLKNCEIEELQQIKGVGIAKASQILAAVELGKRISLTSRVNHYRIKSPDDVSNLLMEEMRYLKKEYFNIALLNTKHEVIAIENISIGSLNASIVHPREVFVVAIKRSSSAIILVHNHPSGDPSPSGEDIRITKRLVEAGKLLGIEVLDHIIIGDNVYYSLKEKSMM.

The region spanning 110 to 232 is the MPN domain; the sequence is RIKSPDDVSN…YYSLKEKSMM (123 aa). Residues H181, H183, and D194 each contribute to the Zn(2+) site. Residues 181 to 194 carry the JAMM motif motif; sequence HNHPSGDPSPSGED.

Belongs to the UPF0758 family.

The sequence is that of UPF0758 protein Amet_2289 from Alkaliphilus metalliredigens (strain QYMF).